A 902-amino-acid chain; its full sequence is DNA mismatch repair protein MutS (902 aa).

647-654 (GPNMGGKS) provides a ligand contact to ATP.

This sequence belongs to the DNA mismatch repair MutS family.

Functionally, this protein is involved in the repair of mismatches in DNA. It is possible that it carries out the mismatch recognition step. This protein has a weak ATPase activity. The polypeptide is DNA mismatch repair protein MutS (Nitrosospira multiformis (strain ATCC 25196 / NCIMB 11849 / C 71)).